The sequence spans 544 residues: Chaperonin GroEL (544 aa).

ATP is bound by residues 30–33, Lys51, 87–91, Gly415, and Asp495; these read TLGP and DGTTT.

It belongs to the chaperonin (HSP60) family. In terms of assembly, forms a cylinder of 14 subunits composed of two heptameric rings stacked back-to-back. Interacts with the co-chaperonin GroES.

The protein resides in the cytoplasm. The catalysed reaction is ATP + H2O + a folded polypeptide = ADP + phosphate + an unfolded polypeptide.. Together with its co-chaperonin GroES, plays an essential role in assisting protein folding. The GroEL-GroES system forms a nano-cage that allows encapsulation of the non-native substrate proteins and provides a physical environment optimized to promote and accelerate protein folding. The protein is Chaperonin GroEL of Aeromonas salmonicida (strain A449).